A 228-amino-acid polypeptide reads, in one-letter code: MAHFMKPSFSAMLIAVTVLAVSPLHARKKVTQPDPNFAATYPDDPRPEVVPNGAIFQPSYGYMPIISGARASHVGDMVTITLVESFAASKSANTTTSRSGGASIIPPTTGPLSFFKATDATASSSHNFKGTGTTGQSNSLSGEITATVARVFPDGTMLIRGEKIMTINRGDEHIRISGLVRPWDIDGTNHVLSTRIGDARISYTGTGDVARASRMGWLGHFFQMISPF.

The N-terminal stretch at 1 to 26 (MAHFMKPSFSAMLIAVTVLAVSPLHA) is a signal peptide.

This sequence belongs to the FlgH family. The basal body constitutes a major portion of the flagellar organelle and consists of four rings (L,P,S, and M) mounted on a central rod.

It localises to the cell outer membrane. It is found in the bacterial flagellum basal body. Its function is as follows. Assembles around the rod to form the L-ring and probably protects the motor/basal body from shearing forces during rotation. The polypeptide is Flagellar L-ring protein (flgH) (Zymomonas mobilis subsp. mobilis (strain ATCC 31821 / ZM4 / CP4)).